The following is a 155-amino-acid chain: Ribosomal RNA large subunit methyltransferase H (155 aa).

Residues leucine 72, glycine 103, and 122-127 each bind S-adenosyl-L-methionine; that span reads LSTLTL.

Belongs to the RNA methyltransferase RlmH family. Homodimer.

The protein localises to the cytoplasm. The catalysed reaction is pseudouridine(1915) in 23S rRNA + S-adenosyl-L-methionine = N(3)-methylpseudouridine(1915) in 23S rRNA + S-adenosyl-L-homocysteine + H(+). Specifically methylates the pseudouridine at position 1915 (m3Psi1915) in 23S rRNA. The polypeptide is Ribosomal RNA large subunit methyltransferase H (Klebsiella pneumoniae (strain 342)).